The sequence spans 425 residues: UDP-N-acetylglucosamine 1-carboxyvinyltransferase (425 aa).

25–26 (KN) lines the phosphoenolpyruvate pocket. Arg-95 is a binding site for UDP-N-acetyl-alpha-D-glucosamine. Catalysis depends on Cys-119, which acts as the Proton donor. Residue Cys-119 is modified to 2-(S-cysteinyl)pyruvic acid O-phosphothioketal. UDP-N-acetyl-alpha-D-glucosamine contacts are provided by residues 124 to 128 (RPVDQ), Asp-306, and Ile-328.

This sequence belongs to the EPSP synthase family. MurA subfamily.

The protein localises to the cytoplasm. The catalysed reaction is phosphoenolpyruvate + UDP-N-acetyl-alpha-D-glucosamine = UDP-N-acetyl-3-O-(1-carboxyvinyl)-alpha-D-glucosamine + phosphate. The protein operates within cell wall biogenesis; peptidoglycan biosynthesis. Functionally, cell wall formation. Adds enolpyruvyl to UDP-N-acetylglucosamine. The chain is UDP-N-acetylglucosamine 1-carboxyvinyltransferase from Thermus thermophilus (strain ATCC BAA-163 / DSM 7039 / HB27).